The primary structure comprises 360 residues: Alpha-N-acetyl-neuraminyl-2,3-beta-galactosyl-1,3-N-acetyl-galactosaminide alpha-2,6-sialyltransferase (360 aa).

The Cytoplasmic segment spans residues 1–71 (MEHVVTCWRL…PGRLLLLTLC (71 aa)). A helical; Signal-anchor for type II membrane protein membrane pass occupies residues 72–94 (ILTFSAVCVFLCCWACLPLCLAT). Residues 95–360 (CLDRHLPAAP…VFAHPSWRAK (266 aa)) lie on the Lumenal side of the membrane. Cys-134 and Cys-283 are disulfide-bonded. N-linked (GlcNAc...) asparagine glycosylation occurs at Asn-193.

This sequence belongs to the glycosyltransferase 29 family. In terms of tissue distribution, high expression in brain and colon and to a lesser extent in lung, heart, kidney, spleen and thymus.

It is found in the golgi apparatus membrane. It carries out the reaction an alpha-Neu5Ac-(2-&gt;3)-beta-D-Gal-(1-&gt;3)-D-GlcNAc derivative + CMP-N-acetyl-beta-neuraminate = an alpha-Neu5Ac-(2-&gt;3)-beta-D-Gal-(1-&gt;3)-[alpha-Neu5Ac-(2-&gt;6)]-D-GlcNAc derivative + CMP + H(+). It catalyses the reaction N-acetyl-alpha-neuraminosyl-(2-&gt;3)-beta-D-galactosyl-(1-&gt;3)-N-acetyl-D-galactosamine + CMP-N-acetyl-beta-neuraminate = N-acetyl-alpha-neuraminosyl-(2-&gt;3)-beta-D-galactosyl-(1-&gt;3)-[N-acetyl-alpha-neuraminosyl-(2-&gt;6)]-N-acetyl-D-galactosamine + CMP + H(+). The catalysed reaction is a ganglioside GM1b (d18:1(4E)) + CMP-N-acetyl-beta-neuraminate = a ganglioside GD1alpha (d18:1(4E)) + CMP + H(+). The enzyme catalyses 3-O-[alpha-Neu5Ac-(2-&gt;3)-beta-D-Gal-(1-&gt;3)-alpha-D-GalNAc]-L-Ser-[protein] + CMP-N-acetyl-beta-neuraminate = a 3-O-{alpha-Neu5Ac-(2-&gt;3)-beta-D-Gal-(1-&gt;3)-[alpha-Neu5Ac-(2-&gt;6)]-alpha-D-GalNAc}-L-seryl-[protein] + CMP + H(+). It carries out the reaction 3-O-[alpha-Neu5Ac-(2-&gt;3)-beta-D-Gal-(1-&gt;3)-alpha-D-GalNAc]-L-Thr-[protein] + CMP-N-acetyl-beta-neuraminate = a 3-O-{alpha-Neu5Ac-(2-&gt;3)-beta-D-Gal-(1-&gt;3)-[alpha-Neu5Ac-(2-&gt;6)]-alpha-D-GalNAc}-L-threonyl-[protein] + CMP + H(+). Its pathway is protein modification; protein glycosylation. It functions in the pathway glycolipid biosynthesis. Transfers the sialyl group (N-acetyl-alpha-neuraminyl or NeuAc) from CMP-NeuAc to the GalNAc residue on the NeuAc-alpha-2,3-Gal-beta-1,3-GalNAc sequence of glycoproteins and glycolipids forming an alpha-2,6-linkage. Produces branched type disialyl structures by transfer of a sialyl group onto a GalNAc residue inside the backbone core chains. Prefers O-glycans to glycoproteins or glycolipids. The protein is Alpha-N-acetyl-neuraminyl-2,3-beta-galactosyl-1,3-N-acetyl-galactosaminide alpha-2,6-sialyltransferase (St6galnac4) of Mus musculus (Mouse).